We begin with the raw amino-acid sequence, 273 residues long: Bis(5'-nucleosyl)-tetraphosphatase, symmetrical (273 aa).

It belongs to the Ap4A hydrolase family.

It carries out the reaction P(1),P(4)-bis(5'-adenosyl) tetraphosphate + H2O = 2 ADP + 2 H(+). Its function is as follows. Hydrolyzes diadenosine 5',5'''-P1,P4-tetraphosphate to yield ADP. The chain is Bis(5'-nucleosyl)-tetraphosphatase, symmetrical from Histophilus somni (strain 2336) (Haemophilus somnus).